The sequence spans 119 residues: Membrane-anchored ubiquitin-fold protein 1 (119 aa).

Residues 9–75 (FEIKFRLPDG…LENNKTLSEC (67 aa)) enclose the Ubiquitin-like domain. Cysteine methyl ester is present on cysteine 116. Cysteine 116 is lipidated: S-farnesyl cysteine. Positions 117–119 (SIM) are cleaved as a propeptide — removed in mature form.

It localises to the cell membrane. Its function is as follows. May serve as docking site to facilitate the association of other proteins to the plasma membrane. The protein is Membrane-anchored ubiquitin-fold protein 1 (MUB1) of Oryza sativa subsp. japonica (Rice).